Consider the following 510-residue polypeptide: Bifunctional purine biosynthesis protein PurH (510 aa).

The MGS-like domain maps to 1–142 (MRALLSVSDK…KNFKDVLIVT (142 aa)).

The protein belongs to the PurH family.

It catalyses the reaction (6R)-10-formyltetrahydrofolate + 5-amino-1-(5-phospho-beta-D-ribosyl)imidazole-4-carboxamide = 5-formamido-1-(5-phospho-D-ribosyl)imidazole-4-carboxamide + (6S)-5,6,7,8-tetrahydrofolate. The catalysed reaction is IMP + H2O = 5-formamido-1-(5-phospho-D-ribosyl)imidazole-4-carboxamide. Its pathway is purine metabolism; IMP biosynthesis via de novo pathway; 5-formamido-1-(5-phospho-D-ribosyl)imidazole-4-carboxamide from 5-amino-1-(5-phospho-D-ribosyl)imidazole-4-carboxamide (10-formyl THF route): step 1/1. It participates in purine metabolism; IMP biosynthesis via de novo pathway; IMP from 5-formamido-1-(5-phospho-D-ribosyl)imidazole-4-carboxamide: step 1/1. This chain is Bifunctional purine biosynthesis protein PurH, found in Campylobacter concisus (strain 13826).